The primary structure comprises 215 residues: Pyrrolidone-carboxylate peptidase (215 aa).

Catalysis depends on residues Glu-80, Cys-143, and His-167.

This sequence belongs to the peptidase C15 family. As to quaternary structure, homotetramer.

Its subcellular location is the cytoplasm. It catalyses the reaction Release of an N-terminal pyroglutamyl group from a polypeptide, the second amino acid generally not being Pro.. In terms of biological role, removes 5-oxoproline from various penultimate amino acid residues except L-proline. The polypeptide is Pyrrolidone-carboxylate peptidase (Bacillus cereus (strain ATCC 10987 / NRS 248)).